The primary structure comprises 136 residues: Holo-[acyl-carrier-protein] synthase (136 aa).

Mg(2+) is bound by residues D7 and E53.

It belongs to the P-Pant transferase superfamily. AcpS family. The cofactor is Mg(2+).

It is found in the cytoplasm. The enzyme catalyses apo-[ACP] + CoA = holo-[ACP] + adenosine 3',5'-bisphosphate + H(+). Its function is as follows. Transfers the 4'-phosphopantetheine moiety from coenzyme A to a Ser of acyl-carrier-protein. This is Holo-[acyl-carrier-protein] synthase from Roseiflexus castenholzii (strain DSM 13941 / HLO8).